The following is a 409-amino-acid chain: MVKETKFYDILGVPVTATDVEIKKAYRKCALKYHPDKNPSEEAAEKFKEASAAYEILSDPEKRDIYDQFGEDGLSGAGGAGGFPGGGFGFGDDIFSQFFGAGGAQRPRGPQRGKDIKHEISASLEELYKGRTAKLALNKQILCKECEGRGGKKGAVKKCTSCNGQGIKFVTRQMGPMIQRFQTECDVCHGTGDIIDPKDRCKSCNGKKVENERKILEVHVEPGMKDGQRIVFKGEADQAPDVIPGDVVFIVSERPHKSFKRDGDDLVYEAEIDLLTAIAGGEFALEHVSGDWLKVGIVPGEVIAPGMRKVIEGKGMPIPKYGGYGNLIIKFTIKFPENHFTSEENLKKLEEILPPRIVPAIPKKATVDECVLADFDPAKYNRTRASRGGANYDSDEEEQGGEGVQCASQ.

A necessary for HAP1 repression in the absence of heme region spans residues Met1–Arg172. A J domain is found at Glu4–Asp72. Substrate contacts are provided by residues Ile116 and Leu135–Leu137. A CR-type zinc finger spans residues Gly130–Arg213. The Zn(2+) site is built by Cys143, Cys146, Cys159, Cys162, Cys185, and Cys188. CXXCXGXG motif repeat units follow at residues Cys143–Gly150, Cys159–Gly166, and Cys185–Gly192. A Glycyl lysine isopeptide (Lys-Gly) (interchain with G-Cter in ubiquitin) cross-link involves residue Lys198. Zn(2+) contacts are provided by Cys201 and Cys204. Residues Cys201–Lys208 form a CXXCXGXG motif repeat. Residues Ile215–Leu216 and Val247–Phe249 each bind substrate. Residues Arg382 to Gln409 form a disordered region. At Cys406 the chain carries Cysteine methyl ester. Cys406 carries S-farnesyl cysteine lipidation. Residues Ala407–Gln409 constitute a propeptide, removed in mature form.

In terms of assembly, homodimer. Interacts with HAP1. Component of the HMC including HAP1, SRO9 and YDJ1.

Its subcellular location is the cytoplasm. It is found in the perinuclear region. Its function is as follows. Probably involved in mitochondrial protein import. Is also required for efficient translocation of pre-pro-alpha-factor. Involved in heme regulation of HAP1, as a component of the high-molecular-weight (HMC) complex. The polypeptide is Mitochondrial protein import protein MAS5 (YDJ1) (Saccharomyces cerevisiae (strain ATCC 204508 / S288c) (Baker's yeast)).